Consider the following 339-residue polypeptide: 3-isopropylmalate dehydrogenase (339 aa).

The substrate site is built by R88, R98, R122, and D212. D212, D236, and D240 together coordinate Mg(2+). 272–284 provides a ligand contact to NAD(+); the sequence is GSAPDIAGKGIAD.

This sequence belongs to the isocitrate and isopropylmalate dehydrogenases family. LeuB type 2 subfamily. Homodimer. Mg(2+) serves as cofactor. Mn(2+) is required as a cofactor.

The protein resides in the cytoplasm. The catalysed reaction is (2R,3S)-3-isopropylmalate + NAD(+) = 4-methyl-2-oxopentanoate + CO2 + NADH. Its pathway is amino-acid biosynthesis; L-leucine biosynthesis; L-leucine from 3-methyl-2-oxobutanoate: step 3/4. In terms of biological role, catalyzes the oxidation of 3-carboxy-2-hydroxy-4-methylpentanoate (3-isopropylmalate) to 3-carboxy-4-methyl-2-oxopentanoate. The product decarboxylates to 4-methyl-2 oxopentanoate. The sequence is that of 3-isopropylmalate dehydrogenase from Corynebacterium aurimucosum (strain ATCC 700975 / DSM 44827 / CIP 107346 / CN-1) (Corynebacterium nigricans).